A 172-amino-acid polypeptide reads, in one-letter code: Hemagglutinin/amebocyte aggregation factor (172 aa).

A signal peptide spans 1–19; the sequence is MNSPAIVIIIFSTLTFSEA. 4 consecutive repeat copies span residues 21–25, 50–54, 73–77, and 102–106. Cystine bridges form between Cys-32/Cys-58, Cys-67/Cys-172, Cys-84/Cys-110, Cys-111/Cys-117, and Cys-123/Cys-167. Repeat copies occupy residues 129–133 and 158–162.

It belongs to the dermatopontin family.

The protein localises to the secreted. In terms of biological role, possesses the property of inducing both aggregation of amebocytes and agglutination of erythrocytes. This Limulus polyphemus (Atlantic horseshoe crab) protein is Hemagglutinin/amebocyte aggregation factor.